The sequence spans 68 residues: Large ribosomal subunit protein uL30 (68 aa).

The protein belongs to the universal ribosomal protein uL30 family. As to quaternary structure, part of the 50S ribosomal subunit.

This Kocuria rhizophila (strain ATCC 9341 / DSM 348 / NBRC 103217 / DC2201) protein is Large ribosomal subunit protein uL30.